The primary structure comprises 325 residues: Protein VP6-B (325 aa).

2 disordered regions span residues 23 to 123 (INLI…TIGA) and 176 to 229 (VAEQ…EEQA). Basic and acidic residues-rich tracts occupy residues 32-52 (ESGK…ESKD) and 61-79 (SQKK…DRRI). Positions 106–123 (KVGGGGGNADAGVGTIGA) are enriched in gly residues. 2 stretches are compositionally biased toward basic and acidic residues: residues 176-201 (VAEQ…AAER) and 210-226 (PHGD…KTSE).

It belongs to the orbivirus VP6 family.

The protein localises to the virion. In terms of biological role, surrounds and interacts with the genomic dsRNA. Possesses ss- and dsRNA-binding capacity. Its hydrophilic nature and capability to bind ss- and dsRNA suggest that it interacts with BTV genomic RNA. In Bluetongue virus 10 (isolate USA) (BTV 10), this protein is Protein VP6-B (Segment-9).